Here is a 418-residue protein sequence, read N- to C-terminus: MKAEIIAVGTEILTGQIVNTNAQFLSEKLAEIGVDVYFQTAVGDNEVRLLSLLEIASQRSSLVILTGGLGATEDDLTKQTLAKFLGKALVFDPQAQEKLDIFFALRPDYARTPNNERQVQIVEGAIPLPNETGLAVGGKLEVDGVTYVVLPGPPSELKPMVLNQLLPKLMTGSKLYSRVLRFFGIGESQLVTILADLIDNQIDPTLAPYAKTGEVTLRLSTKASSQEEANQALDILENQILDCQTFEGISLRDFCYGYGEETSLASIVVEELKRQGKTIAAAESLTAGLFQATVANFSGVSSIFEGGFVTYSLEEKSRMLDIPAKNLEEHGVVSEFTAQKMAEQARSKTQSDFGISLTGVAGPDSLEGHPVGTVFIGLAQDQGTEVIKVNIGGRSRADVRHIAVMHAFNLVRKALLSD.

It belongs to the CinA family.

This Streptococcus pneumoniae serotype 2 (strain D39 / NCTC 7466) protein is Putative competence-damage inducible protein.